A 336-amino-acid polypeptide reads, in one-letter code: Fructose-1,6-bisphosphatase class 1 (336 aa).

Positions 90, 112, 114, and 115 each coordinate Mg(2+). Residues 115–118, Asn-211, and Lys-277 each bind substrate; that span reads DGSS. Position 283 (Glu-283) interacts with Mg(2+).

The protein belongs to the FBPase class 1 family. In terms of assembly, homotetramer. Mg(2+) is required as a cofactor.

It localises to the cytoplasm. The enzyme catalyses beta-D-fructose 1,6-bisphosphate + H2O = beta-D-fructose 6-phosphate + phosphate. It participates in carbohydrate biosynthesis; gluconeogenesis. This chain is Fructose-1,6-bisphosphatase class 1, found in Pseudomonas savastanoi pv. phaseolicola (strain 1448A / Race 6) (Pseudomonas syringae pv. phaseolicola (strain 1448A / Race 6)).